The following is a 511-amino-acid chain: Lysine--tRNA ligase (511 aa).

Residues Glu421 and Glu428 each coordinate Mg(2+).

The protein belongs to the class-II aminoacyl-tRNA synthetase family. Homodimer. Mg(2+) is required as a cofactor.

It localises to the cytoplasm. It carries out the reaction tRNA(Lys) + L-lysine + ATP = L-lysyl-tRNA(Lys) + AMP + diphosphate. This Herminiimonas arsenicoxydans protein is Lysine--tRNA ligase.